A 206-amino-acid polypeptide reads, in one-letter code: uncharacterized protein (206 aa).

Residues 29 to 169 form the Nudix hydrolase domain; it reads YWHSTFHCWV…DGVFAEGFIV (141 aa). Positions 69–90 match the Nudix box motif; that stretch reads AGHIKSGESIEDGVRELKEELG. The Mg(2+) site is built by Glu84 and Glu88.

Belongs to the Nudix hydrolase family. It depends on Mg(2+) as a cofactor.

This is an uncharacterized protein from Clostridium acetobutylicum (strain ATCC 824 / DSM 792 / JCM 1419 / IAM 19013 / LMG 5710 / NBRC 13948 / NRRL B-527 / VKM B-1787 / 2291 / W).